The primary structure comprises 129 residues: Transcriptional regulator WhiB2 (129 aa).

The tract at residues 23–45 (SHAPHIDTGSTPTGAAGRPQLSL) is disordered. Residues 66 to 123 (LCAQTDPEAFFPEKGGSTREAKRICQGCEVRDACLEYALAHDERFGIWGGLSERERRR) form the 4Fe-4S Wbl-type domain. Cys-67, Cys-90, Cys-93, and Cys-99 together coordinate [4Fe-4S] cluster.

The protein belongs to the WhiB family. The cofactor is [4Fe-4S] cluster. The Fe-S cluster can be nitrosylated by nitric oxide (NO). In terms of processing, upon Fe-S cluster removal intramolecular disulfide bonds are formed.

The protein localises to the cytoplasm. Functionally, acts as a transcriptional regulator. Probably redox-responsive. The apo- but not holo-form probably binds DNA. The polypeptide is Transcriptional regulator WhiB2 (whiB2) (Mycolicibacterium smegmatis (strain ATCC 700084 / mc(2)155) (Mycobacterium smegmatis)).